A 207-amino-acid chain; its full sequence is Outer-membrane lipoprotein LolB (207 aa).

Residues 1 to 21 form the signal peptide; sequence MTLPDFRLIRLLPLASLVLTA. Cys-22 carries N-palmitoyl cysteine lipidation. Residue Cys-22 is the site of S-diacylglycerol cysteine attachment.

The protein belongs to the LolB family. As to quaternary structure, monomer.

Its subcellular location is the cell outer membrane. Its function is as follows. Plays a critical role in the incorporation of lipoproteins in the outer membrane after they are released by the LolA protein. This is Outer-membrane lipoprotein LolB from Salmonella agona (strain SL483).